The chain runs to 369 residues: MTGAAEKVNLLGMPKAKLEAFFETLGEKRFRAQQVLQWMHQRGVDDFDQMTNMSKSLREQLKEVAEIRGPEVVYDETSKDGTRKWVMRMDNGNSVETVLIPDGERGTLCVSSQIGCSLDCTFCSTGKRGFNRNLTAAEIIGQVWVARRAFMPFDPNDRPITNVVMMGMGEPLLNFENVVDAMNLMMEDLAYGISKRRVTLSTSGVVPALDRLGEVTDVSLAISLHAPNDELRNQLVPLNKKYPIAELLAATRRYLSRLPDKRKATIEYTVIEGVNDQPEHARELVVLLKGLPCKINLIPFNPFPESDFRRPSMNATRRFQTVLNEAGYVTTIRTTRGDDIDAACGQLVGRVEDRTRRSQRYIAVQQVNP.

Glutamate 96 serves as the catalytic Proton acceptor. The region spanning 102-338 is the Radical SAM core domain; that stretch reads DGERGTLCVS…VTTIRTTRGD (237 aa). A disulfide bond links cysteine 109 and cysteine 344. 3 residues coordinate [4Fe-4S] cluster: cysteine 116, cysteine 120, and cysteine 123. Residues 169-170, serine 201, 223-225, and asparagine 301 contribute to the S-adenosyl-L-methionine site; these read GE and SLH. Cysteine 344 serves as the catalytic S-methylcysteine intermediate.

The protein belongs to the radical SAM superfamily. RlmN family. [4Fe-4S] cluster serves as cofactor.

It is found in the cytoplasm. It catalyses the reaction adenosine(2503) in 23S rRNA + 2 reduced [2Fe-2S]-[ferredoxin] + 2 S-adenosyl-L-methionine = 2-methyladenosine(2503) in 23S rRNA + 5'-deoxyadenosine + L-methionine + 2 oxidized [2Fe-2S]-[ferredoxin] + S-adenosyl-L-homocysteine. The catalysed reaction is adenosine(37) in tRNA + 2 reduced [2Fe-2S]-[ferredoxin] + 2 S-adenosyl-L-methionine = 2-methyladenosine(37) in tRNA + 5'-deoxyadenosine + L-methionine + 2 oxidized [2Fe-2S]-[ferredoxin] + S-adenosyl-L-homocysteine. Specifically methylates position 2 of adenine 2503 in 23S rRNA and position 2 of adenine 37 in tRNAs. m2A2503 modification seems to play a crucial role in the proofreading step occurring at the peptidyl transferase center and thus would serve to optimize ribosomal fidelity. This Marinobacter nauticus (strain ATCC 700491 / DSM 11845 / VT8) (Marinobacter aquaeolei) protein is Dual-specificity RNA methyltransferase RlmN.